Here is a 638-residue protein sequence, read N- to C-terminus: Zinc finger protein 143 (638 aa).

An N-acetylmethionine modification is found at M1. K213 participates in a covalent cross-link: Glycyl lysine isopeptide (Lys-Gly) (interchain with G-Cter in SUMO2). 4 C2H2-type zinc fingers span residues 237 to 261 (FRCK…ERSH), 267 to 291 (YQCE…FRTH), 297 to 321 (YRCS…IRTH), and 327 to 351 (FKCP…IRTH). T352 is subject to Phosphothreonine. 3 C2H2-type zinc fingers span residues 357–381 (YYCT…VRIH), 387–411 (YVCT…HVVH), and 417–440 (YNCN…RTAH). K406 is covalently cross-linked (Glycyl lysine isopeptide (Lys-Gly) (interchain with G-Cter in SUMO2)).

Belongs to the GLI C2H2-type zinc-finger protein family. Interacts with CHD8. Forms a complex with HCFC1 and ZNF143.

The protein localises to the nucleus. In terms of biological role, transcriptional activator. In complex with HCFC1 and ZNF143, regulates the expression of several genes, including AP2S1, ESCO2, OPHN1, RBL1, UBXN8 and ZNF32. Activates the gene for selenocysteine tRNA (tRNAsec). Binds to the SPH motif of small nuclear RNA (snRNA) gene promoters. Participates in efficient U6 RNA polymerase III transcription via its interaction with CHD8. The polypeptide is Zinc finger protein 143 (Znf143) (Rattus norvegicus (Rat)).